The primary structure comprises 78 residues: RNA-binding protein KhpA (78 aa).

The 50-residue stretch at threonine 29–lysine 78 folds into the KH domain.

Belongs to the KhpA RNA-binding protein family.

It is found in the cytoplasm. A probable RNA-binding protein. The protein is RNA-binding protein KhpA of Chlamydia caviae (strain ATCC VR-813 / DSM 19441 / 03DC25 / GPIC) (Chlamydophila caviae).